A 267-amino-acid chain; its full sequence is Thiazole synthase (267 aa).

Catalysis depends on K107, which acts as the Schiff-base intermediate with DXP. 1-deoxy-D-xylulose 5-phosphate contacts are provided by residues G168, A194–G195, and N216–T217.

The protein belongs to the ThiG family. As to quaternary structure, homotetramer. Forms heterodimers with either ThiH or ThiS.

The protein localises to the cytoplasm. The enzyme catalyses [ThiS sulfur-carrier protein]-C-terminal-Gly-aminoethanethioate + 2-iminoacetate + 1-deoxy-D-xylulose 5-phosphate = [ThiS sulfur-carrier protein]-C-terminal Gly-Gly + 2-[(2R,5Z)-2-carboxy-4-methylthiazol-5(2H)-ylidene]ethyl phosphate + 2 H2O + H(+). It participates in cofactor biosynthesis; thiamine diphosphate biosynthesis. In terms of biological role, catalyzes the rearrangement of 1-deoxy-D-xylulose 5-phosphate (DXP) to produce the thiazole phosphate moiety of thiamine. Sulfur is provided by the thiocarboxylate moiety of the carrier protein ThiS. In vitro, sulfur can be provided by H(2)S. The protein is Thiazole synthase of Aquifex aeolicus (strain VF5).